The chain runs to 404 residues: Serine/threonine transporter SstT (404 aa).

The next 8 helical transmembrane spans lie at 17 to 37, 39 to 59, 75 to 95, 138 to 158, 179 to 199, 212 to 232, 287 to 307, and 313 to 333; these read IGIGVVIGVMLGILAPDLTGF, ILGKLFVGGLKAIAPLLVFAL, MTLIIVLYLFGTFASALVAVL, ALATANYIGVLSWAIIFGLAL, IVVWIINLAPIGIMSLVFTTI, FLILVLVGTMLFVALVVNPLI, IPLGATINMGGAAITINVLTL, and FGIPIDFLTALLLSVVAAVSA.

The protein belongs to the dicarboxylate/amino acid:cation symporter (DAACS) (TC 2.A.23) family.

The protein localises to the cell membrane. It catalyses the reaction L-serine(in) + Na(+)(in) = L-serine(out) + Na(+)(out). The catalysed reaction is L-threonine(in) + Na(+)(in) = L-threonine(out) + Na(+)(out). Its function is as follows. Involved in the import of serine and threonine into the cell, with the concomitant import of sodium (symport system). The sequence is that of Serine/threonine transporter SstT from Streptococcus pyogenes serotype M1.